We begin with the raw amino-acid sequence, 577 residues long: Arginine--tRNA ligase (577 aa).

The 'HIGH' region signature appears at 122-132 (PNVAKEMHVGH).

The protein belongs to the class-I aminoacyl-tRNA synthetase family. As to quaternary structure, monomer.

The protein resides in the cytoplasm. It catalyses the reaction tRNA(Arg) + L-arginine + ATP = L-arginyl-tRNA(Arg) + AMP + diphosphate. This chain is Arginine--tRNA ligase, found in Salmonella gallinarum (strain 287/91 / NCTC 13346).